We begin with the raw amino-acid sequence, 398 residues long: Argininosuccinate synthase (398 aa).

10-18 (AYSGGLDTS) contributes to the ATP binding site. Y87 is a binding site for L-citrulline. G117 is an ATP binding site. 3 residues coordinate L-aspartate: T119, N123, and D124. N123 serves as a coordination point for L-citrulline. Positions 127, 175, 260, and 272 each coordinate L-citrulline.

Belongs to the argininosuccinate synthase family. Type 1 subfamily. In terms of assembly, homotetramer.

It localises to the cytoplasm. It carries out the reaction L-citrulline + L-aspartate + ATP = 2-(N(omega)-L-arginino)succinate + AMP + diphosphate + H(+). It participates in amino-acid biosynthesis; L-arginine biosynthesis; L-arginine from L-ornithine and carbamoyl phosphate: step 2/3. The polypeptide is Argininosuccinate synthase (Lactococcus lactis subsp. lactis (strain IL1403) (Streptococcus lactis)).